The primary structure comprises 431 residues: MDSIEIVGGKKLKGIIPISGAKNAALPLMIAALLTEETLSLDNIPHLADIELLIRILNNHGVGYAVDGQKNHTECVHSRTIHFTAQKITTTYAPYDLVRKMRASFWVIGPLLARCREAYVSLPGGCAIGTRPVDFILEGLKTLGARITIENGYVHAKVPKGLKGAHYRFPKVTVGGTHVMIMAAVTANGKTVLENAACEPEVTNLVQALNAMGAKITGEGTTILTIEGVQKLNGARISVIPDRIEAGTYAMAVAMTGGDVMLKNANPHHLTQVLEILQKTGLDIEIKPQGIHLKRNLRQTKIMPVDIKTGPYPAFPTDLQAQFMALMTRAQGISHITETIFENRFMHVQELNRLGAQIKLDGQTATVFGTEHLQGAPVMATDLRASVSLVIAALAAKGKTTVNRVYHLDRGFERLEEKLARCGATIQRITV.

22-23 is a phosphoenolpyruvate binding site; the sequence is KN. UDP-N-acetyl-alpha-D-glucosamine is bound at residue arginine 102. Residue cysteine 126 is the Proton donor of the active site. At cysteine 126 the chain carries 2-(S-cysteinyl)pyruvic acid O-phosphothioketal. Positions 318 and 340 each coordinate UDP-N-acetyl-alpha-D-glucosamine.

The protein belongs to the EPSP synthase family. MurA subfamily.

Its subcellular location is the cytoplasm. It carries out the reaction phosphoenolpyruvate + UDP-N-acetyl-alpha-D-glucosamine = UDP-N-acetyl-3-O-(1-carboxyvinyl)-alpha-D-glucosamine + phosphate. The protein operates within cell wall biogenesis; peptidoglycan biosynthesis. Functionally, cell wall formation. Adds enolpyruvyl to UDP-N-acetylglucosamine. In Bartonella henselae (strain ATCC 49882 / DSM 28221 / CCUG 30454 / Houston 1) (Rochalimaea henselae), this protein is UDP-N-acetylglucosamine 1-carboxyvinyltransferase.